A 78-amino-acid chain; its full sequence is Putative permease-like protein YdzE (78 aa).

Helical transmembrane passes span 2 to 22 (YLGIVSTACAFLLWNHGLQLL), 27 to 47 (GGLFFFFQPLVGTLLGWILLG), and 49 to 69 (QIGGTFWIGSFLILSGVLLVI). The EamA domain maps to 2–70 (YLGIVSTACA…ILSGVLLVIK (69 aa)).

The protein belongs to the EamA transporter family.

The protein localises to the cell membrane. This is Putative permease-like protein YdzE (ydzE) from Bacillus subtilis (strain 168).